The following is a 320-amino-acid chain: Cytochrome f (320 aa).

Positions 1–35 are cleaved as a signal peptide; sequence MENRNTFSWVKEQITRSISVSIMIYVITRTSISNA. Heme is bound by residues Y36, C56, C59, and H60. A helical membrane pass occupies residues 286-305; the sequence is VQGLLFFFASVILAQVFLVL.

This sequence belongs to the cytochrome f family. As to quaternary structure, the 4 large subunits of the cytochrome b6-f complex are cytochrome b6, subunit IV (17 kDa polypeptide, petD), cytochrome f and the Rieske protein, while the 4 small subunits are PetG, PetL, PetM and PetN. The complex functions as a dimer. Heme serves as cofactor.

The protein localises to the plastid. It localises to the chloroplast thylakoid membrane. Its function is as follows. Component of the cytochrome b6-f complex, which mediates electron transfer between photosystem II (PSII) and photosystem I (PSI), cyclic electron flow around PSI, and state transitions. In Triticum aestivum (Wheat), this protein is Cytochrome f (petA).